A 951-amino-acid polypeptide reads, in one-letter code: METKYNPQDIEQPLYEHWEKQGYFKPHGNTSKESFSIMIPPPNVTGSLHMGHAFQQTIMDTLIRYQRMQGKNTLWQAGTDHAGIATQMVVERKIAAEEGKTRHDYGRDAFIDKIWQWKGESGGNITNQMRRLGNSVDWERERFTMDEGLSNAVKEVFVRLYKEDLIYRGKRLVNWDPKLRTAISDLEVENRDVKGSMWHLRYPLADGVKTAEGKDYLVVATTRPETMLGDTGVAVNPEDPRYKDLIGKEVILPLIGRRIPIVGDEHADMEKGTGCVKITPAHDFNDYEVGKRHQLPMVNILTFDGDIRQSAEIFDTNGEASTACSSEIPEAFQGLERFAARKALVAAFDELGLLEEIKAHDLTVPYGDRGGVVIEPMLTDQWYVRAAVLAKPAVEAVEDGRIQFVPKQYENMYFSWMRDIQDWCISRQLWWGHRIPAWYDANGNVYVGRTEAEVRSENNLADDVVLNQDEDVLDTWFSSGLWTFSTLGWPEQTPDLKSFHPSSVMVSGFDIIFFWIARMIMLTMHFIKDEDGKPQVPFNTVYMTGLIRDEEGQKMSKSKGNVIDPLDMVDGISLEALLEKRTGNMMQPQLAEKIRKRTEKQFPNGIEPHGTDALRFTLAALASTGRDINWDMKRLEGYRNFCNKLWNASRFVLMNTEDQDCGFNGGEMELSLADRWILAEFNRTVKAYRDALDGYRFDIAANILYEFTWNQFCDWYLELTKPVMNGGSEAELRGTRHTLVTVLEALLRLAHPIIPFITETIWLRVKALKGINDDTIMLQPFPEFNAAQEDTLALNDLEWIKQAIIAVRNIRAEMNIAPGKPLEVLLRDATAEAQRRVEENLSFIQTLARLESITLLPAGDKGPVSVTKLIEGAELLIPMAGLIDKAAELDRLAKEVAKLEAEIGRIESKLSNEGFVARAPEAVVAKEREKMDGYAVAKTKLLEQQAVIAAL.

The short motif at proline 42–histidine 52 is the 'HIGH' region element. The 'KMSKS' region motif lies at lysine 554–serine 558. Residue lysine 557 coordinates ATP. The stretch at alanine 880–glycine 914 forms a coiled coil.

Belongs to the class-I aminoacyl-tRNA synthetase family. ValS type 1 subfamily. In terms of assembly, monomer.

It localises to the cytoplasm. The catalysed reaction is tRNA(Val) + L-valine + ATP = L-valyl-tRNA(Val) + AMP + diphosphate. Functionally, catalyzes the attachment of valine to tRNA(Val). As ValRS can inadvertently accommodate and process structurally similar amino acids such as threonine, to avoid such errors, it has a 'posttransfer' editing activity that hydrolyzes mischarged Thr-tRNA(Val) in a tRNA-dependent manner. This Pectobacterium atrosepticum (strain SCRI 1043 / ATCC BAA-672) (Erwinia carotovora subsp. atroseptica) protein is Valine--tRNA ligase.